A 195-amino-acid chain; its full sequence is Protein GrpE (195 aa).

Basic and acidic residues predominate over residues 1–20 (MSSKEQKTPDEQVLDQKEAA). Residues 1-40 (MSSKEQKTPDEQVLDQKEAAKGQQADAAPETADVADPRDA) are disordered.

It belongs to the GrpE family. In terms of assembly, homodimer.

It is found in the cytoplasm. Participates actively in the response to hyperosmotic and heat shock by preventing the aggregation of stress-denatured proteins, in association with DnaK and GrpE. It is the nucleotide exchange factor for DnaK and may function as a thermosensor. Unfolded proteins bind initially to DnaJ; upon interaction with the DnaJ-bound protein, DnaK hydrolyzes its bound ATP, resulting in the formation of a stable complex. GrpE releases ADP from DnaK; ATP binding to DnaK triggers the release of the substrate protein, thus completing the reaction cycle. Several rounds of ATP-dependent interactions between DnaJ, DnaK and GrpE are required for fully efficient folding. The chain is Protein GrpE from Pectobacterium carotovorum subsp. carotovorum (strain PC1).